The primary structure comprises 52 residues: Protein YabQ (52 aa).

Identified as a multicopy suppressor of the slow growth phenotype of an rsgA (yjeQ) deletion mutant. This Escherichia coli (strain K12) protein is Protein YabQ (yabQ).